A 362-amino-acid polypeptide reads, in one-letter code: RING finger protein 32 (362 aa).

The RING-type 1; atypical zinc finger occupies 127–169 (CPICKEEFELRPQVLLSCSHVFHRACLQAFEKFTNKKTCPLCR). The IQ domain occupies 186 to 215 (RIKCVTRIQAYWRGYVVRKWYRNLRETVPP). The segment at 293 to 352 (CSICLAPLSPAGGQRVGAGQRSRETALLSCSHVFHHACLLALEEFSVGDRPPFHACPLCR) adopts an RING-type 2; atypical zinc-finger fold.

The protein localises to the cytoplasm. In terms of biological role, may play a role in sperm formation. In Macaca fascicularis (Crab-eating macaque), this protein is RING finger protein 32 (RNF32).